The chain runs to 38 residues: GIDPNFRTSRPVTGDHAGHKVYAPADPPVKEKALGIHG.

Positions 1 to 11 (GIDPNFRTSRP) are enriched in polar residues. Residues 1–38 (GIDPNFRTSRPVTGDHAGHKVYAPADPPVKEKALGIHG) are disordered. An N-terminal extension region spans residues 1–38 (GIDPNFRTSRPVTGDHAGHKVYAPADPPVKEKALGIHG). Positions 16 and 19 each coordinate Zn(2+). Basic and acidic residues predominate over residues 28–38 (PVKEKALGIHG). Lysine 30 carries the post-translational modification N6-methyllysine. Histidine 37 is a Zn(2+) binding site.

The cofactor is [3Fe-4S] cluster. [4Fe-4S] cluster serves as cofactor. Zn(2+) is required as a cofactor.

Functionally, ferredoxins are iron-sulfur proteins that transfer electrons in a wide variety of metabolic reactions. The sequence is that of Zinc-containing ferredoxin (zfx) from Metallosphaera prunae.